A 199-amino-acid chain; its full sequence is ATP-dependent Clp protease proteolytic subunit (199 aa).

The Nucleophile role is filled by serine 97. Histidine 122 is an active-site residue.

Belongs to the peptidase S14 family. In terms of assembly, fourteen ClpP subunits assemble into 2 heptameric rings which stack back to back to give a disk-like structure with a central cavity, resembling the structure of eukaryotic proteasomes.

Its subcellular location is the cytoplasm. It carries out the reaction Hydrolysis of proteins to small peptides in the presence of ATP and magnesium. alpha-casein is the usual test substrate. In the absence of ATP, only oligopeptides shorter than five residues are hydrolyzed (such as succinyl-Leu-Tyr-|-NHMec, and Leu-Tyr-Leu-|-Tyr-Trp, in which cleavage of the -Tyr-|-Leu- and -Tyr-|-Trp bonds also occurs).. Cleaves peptides in various proteins in a process that requires ATP hydrolysis. Has a chymotrypsin-like activity. Plays a major role in the degradation of misfolded proteins. This is ATP-dependent Clp protease proteolytic subunit from Geotalea uraniireducens (strain Rf4) (Geobacter uraniireducens).